Reading from the N-terminus, the 303-residue chain is UDP-3-O-acyl-N-acetylglucosamine deacetylase (303 aa).

3 residues coordinate Zn(2+): His-78, His-237, and Asp-241. His-264 (proton donor) is an active-site residue.

The protein belongs to the LpxC family. The cofactor is Zn(2+).

The catalysed reaction is a UDP-3-O-[(3R)-3-hydroxyacyl]-N-acetyl-alpha-D-glucosamine + H2O = a UDP-3-O-[(3R)-3-hydroxyacyl]-alpha-D-glucosamine + acetate. The protein operates within glycolipid biosynthesis; lipid IV(A) biosynthesis; lipid IV(A) from (3R)-3-hydroxytetradecanoyl-[acyl-carrier-protein] and UDP-N-acetyl-alpha-D-glucosamine: step 2/6. Catalyzes the hydrolysis of UDP-3-O-myristoyl-N-acetylglucosamine to form UDP-3-O-myristoylglucosamine and acetate, the committed step in lipid A biosynthesis. The sequence is that of UDP-3-O-acyl-N-acetylglucosamine deacetylase from Xanthomonas campestris pv. campestris (strain B100).